Here is a 555-residue protein sequence, read N- to C-terminus: Connector enhancer of kinase suppressor of ras 3 (555 aa).

In terms of domain architecture, SAM spans 7 to 72 (WSPKQVVDWT…LEAVDLLCAL (66 aa)). Residues 80–174 (NMKNLVLKLR…TTVQKDCFVA (95 aa)) form the CRIC domain. A PDZ domain is found at 211–293 (EVHLPNIKPG…GVVLLLKKRP (83 aa)). Disordered regions lie at residues 309–334 (WKPPLVQTSPPPATTQSPESTMDTSL), 347–390 (PPPP…FLDQ), and 517–537 (IPFQEEGTKKKSGSSATKSSS). The DUF1170 domain occupies 325-546 (SPESTMDTSL…STEPSLLVSW (222 aa)). Residues S381 and S383 each carry the phosphoserine modification.

The protein belongs to the CNKSR family. In terms of assembly, interacts with epithelial sodium channel ENaC. Interacts directly with SCNN1A (ENaC subunit alpha) and SCNN1B (ENaC subunit beta) C-terminal tails. Interacts with ENaC regulatory proteins NEDD4L, RAF1 and SGK1.

It is found in the cytoplasm. It localises to the apical cell membrane. Involved in transepithelial sodium transport. Regulates aldosterone-induced and epithelial sodium channel (ENaC)-mediated sodium transport through regulation of ENaC cell surface expression. Acts as a scaffold protein coordinating the assembly of an ENaC-regulatory complex (ERC). In Homo sapiens (Human), this protein is Connector enhancer of kinase suppressor of ras 3 (CNKSR3).